The sequence spans 179 residues: Large ribosomal subunit protein uL6 (179 aa).

It belongs to the universal ribosomal protein uL6 family. As to quaternary structure, part of the 50S ribosomal subunit.

This protein binds to the 23S rRNA, and is important in its secondary structure. It is located near the subunit interface in the base of the L7/L12 stalk, and near the tRNA binding site of the peptidyltransferase center. The chain is Large ribosomal subunit protein uL6 from Spiroplasma kunkelii.